Consider the following 110-residue polypeptide: UPF0060 membrane protein Psyc_0916 (110 aa).

A run of 4 helical transmembrane segments spans residues 7–27 (VGLF…PYLW), 33–53 (SIWL…LLSL), 63–83 (AAYG…VNGI), and 87–107 (TWDI…MFAP).

It belongs to the UPF0060 family.

It localises to the cell inner membrane. The chain is UPF0060 membrane protein Psyc_0916 from Psychrobacter arcticus (strain DSM 17307 / VKM B-2377 / 273-4).